The chain runs to 196 residues: Penicillin-binding protein activator LpoB (196 aa).

A signal peptide spans 1–16; the sequence is MKKYLGIVLMALVIAG. C17 is lipidated: N-palmitoyl cysteine. The S-diacylglycerol cysteine moiety is linked to residue C17. The disordered stretch occupies residues 24 to 54; that stretch reads TEQPATIEPAVPTPSKPQLPPSESQPLPTPP. Positions 34–43 are enriched in pro residues; sequence VPTPSKPQLP.

Belongs to the LpoB family. As to quaternary structure, interacts with PBP1b.

The protein localises to the cell outer membrane. Functionally, regulator of peptidoglycan synthesis that is essential for the function of penicillin-binding protein 1B (PBP1b). The sequence is that of Penicillin-binding protein activator LpoB from Dickeya dadantii (strain 3937) (Erwinia chrysanthemi (strain 3937)).